Here is a 352-residue protein sequence, read N- to C-terminus: Ferrochelatase (352 aa).

Fe cation is bound by residues H222 and E303.

This sequence belongs to the ferrochelatase family.

The protein localises to the cytoplasm. The catalysed reaction is heme b + 2 H(+) = protoporphyrin IX + Fe(2+). Its pathway is porphyrin-containing compound metabolism; protoheme biosynthesis; protoheme from protoporphyrin-IX: step 1/1. Functionally, catalyzes the ferrous insertion into protoporphyrin IX. This chain is Ferrochelatase, found in Brucella canis (strain ATCC 23365 / NCTC 10854 / RM-666).